The chain runs to 402 residues: Phosphoglycerate kinase (402 aa).

Substrate-binding positions include 24-26 (DFN), R40, 63-66 (HFGR), R122, and R155. Residues K206, G297, E328, and 357-360 (GGDS) contribute to the ATP site.

This sequence belongs to the phosphoglycerate kinase family. Monomer.

It is found in the cytoplasm. It catalyses the reaction (2R)-3-phosphoglycerate + ATP = (2R)-3-phospho-glyceroyl phosphate + ADP. Its pathway is carbohydrate degradation; glycolysis; pyruvate from D-glyceraldehyde 3-phosphate: step 2/5. This Synechococcus sp. (strain ATCC 27144 / PCC 6301 / SAUG 1402/1) (Anacystis nidulans) protein is Phosphoglycerate kinase.